A 60-amino-acid chain; its full sequence is ATP synthase subunit J, mitochondrial (60 aa).

The helical transmembrane segment at 13–32 (ILKPMLPFFLGGAIVFYGTV) threads the bilayer.

Belongs to the ATPase j subunit family. As to quaternary structure, F-type ATPases have 2 components, CF(1) - the catalytic core - and CF(0) - the membrane proton channel. In yeast, the dimeric form of ATP synthase consists of 17 polypeptides: alpha, beta, gamma, delta, epsilon, 4 (B), 5 (OSCP), 6 (A), 8, 9 (C), d, E (Tim11), f, g, h, i/j and k.

Its subcellular location is the mitochondrion membrane. Mitochondrial membrane ATP synthase (F(1)F(0) ATP synthase or Complex V) produces ATP from ADP in the presence of a proton gradient across the membrane which is generated by electron transport complexes of the respiratory chain. F-type ATPases consist of two structural domains, F(1) - containing the extramembraneous catalytic core and F(0) - containing the membrane proton channel, linked together by a central stalk and a peripheral stalk. During catalysis, ATP synthesis in the catalytic domain of F(1) is coupled via a rotary mechanism of the central stalk subunits to proton translocation. Part of the complex F(0) domain. Minor subunit located with subunit a in the membrane. The sequence is that of ATP synthase subunit J, mitochondrial (atp18) from Schizosaccharomyces pombe (strain 972 / ATCC 24843) (Fission yeast).